The sequence spans 554 residues: Phospho-2-dehydro-3-deoxyheptonate aldolase 1, chloroplastic (554 aa).

The N-terminal 39 residues, 1–39 (MSLATSSSMAGGAAVVPRSATATTASAFVTMKRRATAVR), are a transit peptide targeting the chloroplast. Residues 41 to 70 (VHAAEPSKNPPVGVPSAAKTSSPSVAAPEK) form a disordered region.

It belongs to the class-II DAHP synthase family.

It localises to the plastid. The protein localises to the chloroplast. The catalysed reaction is D-erythrose 4-phosphate + phosphoenolpyruvate + H2O = 7-phospho-2-dehydro-3-deoxy-D-arabino-heptonate + phosphate. It participates in metabolic intermediate biosynthesis; chorismate biosynthesis; chorismate from D-erythrose 4-phosphate and phosphoenolpyruvate: step 1/7. The polypeptide is Phospho-2-dehydro-3-deoxyheptonate aldolase 1, chloroplastic (DAHPS1) (Oryza sativa subsp. japonica (Rice)).